The following is a 138-amino-acid chain: Small ribosomal subunit protein uS11c (138 aa).

It belongs to the universal ribosomal protein uS11 family. In terms of assembly, part of the 30S ribosomal subunit.

It is found in the plastid. The protein localises to the chloroplast. This is Small ribosomal subunit protein uS11c from Morus indica (Mulberry).